A 305-amino-acid polypeptide reads, in one-letter code: Tyrosine recombinase XerC (305 aa).

The 92-residue stretch at Thr4–Glu95 folds into the Core-binding (CB) domain. The Tyr recombinase domain maps to Leu116 to Thr298. Residues Arg159, Lys182, His250, Arg253, and His276 contribute to the active site. Tyr285 (O-(3'-phospho-DNA)-tyrosine intermediate) is an active-site residue.

It belongs to the 'phage' integrase family. XerC subfamily. As to quaternary structure, forms a cyclic heterotetrameric complex composed of two molecules of XerC and two molecules of XerD.

The protein localises to the cytoplasm. Its function is as follows. Site-specific tyrosine recombinase, which acts by catalyzing the cutting and rejoining of the recombining DNA molecules. The XerC-XerD complex is essential to convert dimers of the bacterial chromosome into monomers to permit their segregation at cell division. It also contributes to the segregational stability of plasmids. The protein is Tyrosine recombinase XerC of Rickettsia rickettsii (strain Iowa).